The primary structure comprises 341 residues: tRNA N6-adenosine threonylcarbamoyltransferase (341 aa).

H120 and H124 together coordinate Fe cation. Residues 142-146, D175, G188, D192, and N281 contribute to the substrate site; that span reads VVSGG. D310 lines the Fe cation pocket.

It belongs to the KAE1 / TsaD family. Fe(2+) is required as a cofactor.

It is found in the cytoplasm. It catalyses the reaction L-threonylcarbamoyladenylate + adenosine(37) in tRNA = N(6)-L-threonylcarbamoyladenosine(37) in tRNA + AMP + H(+). In terms of biological role, required for the formation of a threonylcarbamoyl group on adenosine at position 37 (t(6)A37) in tRNAs that read codons beginning with adenine. Is involved in the transfer of the threonylcarbamoyl moiety of threonylcarbamoyl-AMP (TC-AMP) to the N6 group of A37, together with TsaE and TsaB. TsaD likely plays a direct catalytic role in this reaction. This chain is tRNA N6-adenosine threonylcarbamoyltransferase, found in Anoxybacillus flavithermus (strain DSM 21510 / WK1).